The chain runs to 429 residues: Protein ABERRANT PANICLE ORGANIZATION 1 (429 aa).

A compositionally biased stretch (pro residues) spans 1–11 (MMNPRRLPPLP). The interval 1–21 (MMNPRRLPPLPSSTSSASAAD) is disordered. One can recognise an F-box domain in the interval 25-71 (PRVWRRLPQPLVDRILACLPTPSFLRLRAACRRFYHLLFSSPFLHSH). A run of 2 helical transmembrane segments spans residues 72–92 (LLLSPHLPFFAFVVPAAGHLL) and 112–132 (VAGGPAAFSPAAASAGLLAFL). 3 Kelch repeats span residues 229–277 (MAFA…ELGG), 284–339 (RVAL…AEGG), and 350–397 (YVVL…GAAG).

Part of a putative SCF (ASK/Cullin/F-box) ubiquitin ligase complex. Interacts with FL/APO2. In terms of tissue distribution, expressed in apical meristems and the lateral organ primordia throughout development. Expressed in seedlings, roots, leaves, shoot apical meristem (SAM), developing panicles, and, at lower levels, in developing seeds.

It is found in the membrane. The protein operates within protein modification; protein ubiquitination. Component of SCF(ASK-cullin-F-box) E3 ubiquitin ligase complexes, which may mediate the ubiquitination and subsequent proteasomal degradation of target proteins. Together with FL/APO2, involved in the temporal regulation of meristem identity during both vegetative and reproductive developments in an APO2-dependent manner. Promotes spikelet formation by suppressing the precocious conversion of inflorescence meristems to spikelet meristems, probably via a positive regulation of class-C floral homeotic genes, but not of class-B genes, and through the control of cell proliferation in meristems. Mediates culm development and strength/diameter enhancement at internodes. Required for the regulation of the plastochron, floral organ identity, and floral determinacy. Controls the number of primary rachis branches (PRBs). May trigger the formation of vascular bundle systems which, consequently, promote carbohydrate translocation to panicles. Involved in ozone-induced grain yield regulation. In Oryza sativa subsp. japonica (Rice), this protein is Protein ABERRANT PANICLE ORGANIZATION 1.